A 490-amino-acid chain; its full sequence is GTPase Der (490 aa).

EngA-type G domains are found at residues 3-166 (PVVA…MEDL) and 203-376 (IKLA…DSST). GTP-binding positions include 9 to 16 (GRPNVGKS), 56 to 60 (DTGGI), 118 to 121 (NKTD), 209 to 216 (GRPNVGKS), 256 to 260 (DTAGV), and 321 to 324 (NKWD). A KH-like domain is found at 377–461 (RRVGTSMLTR…PIRIQFKEGE (85 aa)).

It belongs to the TRAFAC class TrmE-Era-EngA-EngB-Septin-like GTPase superfamily. EngA (Der) GTPase family. As to quaternary structure, associates with the 50S ribosomal subunit.

In terms of biological role, GTPase that plays an essential role in the late steps of ribosome biogenesis. This Shigella flexneri serotype 5b (strain 8401) protein is GTPase Der.